Reading from the N-terminus, the 417-residue chain is MSLFEELKWRNLITECSDEKRAKLLLDGNKKIKFYCGFDATAGSLTVGHLVQIITFLLIQKKGHFPIVLLGGATSFIGDPKKIEERKLLDPSQILDNFNKISLQFKKILSFISFEIVNNYDWISKIDVINFLRKYGKLFNINYMLSKEVIANRLKKGLSYAEFSYMVLQSLDFQYLFEHKNVIMQFGGSDQWGNITSGLELIRKINKIKDNDKPVGMTNALLLKSDGTKFGKSEDGVLWLDQKLTSPYKIYQYFLNTEDKEVVNYLKSLTLLSKKEIINLKEENIVNPQKRLAQKILAKEIITLIHGKKIFENCFNTNQALFVGKKDQLSEQSFYFLKYTLNYIEVNDKISLLEALVFTKLTNSKNKAKELISNHAIKIFDQIVDDTELILNIKHSLFNKYILLKKGKRFNALIIFK.

Residue Y35 coordinates L-tyrosine. A 'HIGH' region motif is present at residues 40–49 (ATAGSLTVGH). Residues Y165 and Q169 each contribute to the L-tyrosine site. The short motif at 229-233 (KFGKS) is the 'KMSKS' region element. An ATP-binding site is contributed by K232. An S4 RNA-binding domain is found at 350 to 416 (ISLLEALVFT…GKRFNALIIF (67 aa)).

Belongs to the class-I aminoacyl-tRNA synthetase family. TyrS type 1 subfamily. In terms of assembly, homodimer.

It is found in the cytoplasm. The enzyme catalyses tRNA(Tyr) + L-tyrosine + ATP = L-tyrosyl-tRNA(Tyr) + AMP + diphosphate + H(+). Catalyzes the attachment of tyrosine to tRNA(Tyr) in a two-step reaction: tyrosine is first activated by ATP to form Tyr-AMP and then transferred to the acceptor end of tRNA(Tyr). The polypeptide is Tyrosine--tRNA ligase (Phytoplasma mali (strain AT)).